Here is a 164-residue protein sequence, read N- to C-terminus: MPLLDSFKVDHTKMPAPAVRLAKVMKTPKGDDISVFDLRFCIPNKDIMSEKGTHTLEHLFAGFMRDHLNSNSVEIIDISPMGCRTGFYMSLIGTPDEKSIAKAWEAAMKDVLSVSDQSKIPELNIYQCGTCAMHSLDEAKQIAQKVLNLGISIINNKELKLENA.

Fe cation is bound by residues His-54, His-58, and Cys-128.

The protein belongs to the LuxS family. In terms of assembly, homodimer. The cofactor is Fe cation.

It catalyses the reaction S-(5-deoxy-D-ribos-5-yl)-L-homocysteine = (S)-4,5-dihydroxypentane-2,3-dione + L-homocysteine. Functionally, involved in the synthesis of autoinducer 2 (AI-2) which is secreted by bacteria and is used to communicate both the cell density and the metabolic potential of the environment. The regulation of gene expression in response to changes in cell density is called quorum sensing. Catalyzes the transformation of S-ribosylhomocysteine (RHC) to homocysteine (HC) and 4,5-dihydroxy-2,3-pentadione (DPD). The protein is S-ribosylhomocysteine lyase of Campylobacter jejuni subsp. jejuni serotype O:2 (strain ATCC 700819 / NCTC 11168).